The sequence spans 561 residues: DNA ligase B (561 aa).

Lysine 125 functions as the N6-AMP-lysine intermediate in the catalytic mechanism.

Belongs to the NAD-dependent DNA ligase family. LigB subfamily.

The catalysed reaction is NAD(+) + (deoxyribonucleotide)n-3'-hydroxyl + 5'-phospho-(deoxyribonucleotide)m = (deoxyribonucleotide)n+m + AMP + beta-nicotinamide D-nucleotide.. Catalyzes the formation of phosphodiester linkages between 5'-phosphoryl and 3'-hydroxyl groups in double-stranded DNA using NAD as a coenzyme and as the energy source for the reaction. This chain is DNA ligase B, found in Salmonella paratyphi B (strain ATCC BAA-1250 / SPB7).